Here is a 254-residue protein sequence, read N- to C-terminus: Pimeloyl-[acyl-carrier protein] methyl ester esterase (254 aa).

In terms of domain architecture, AB hydrolase-1 spans 16–242 (LVLIHGWGMN…ASHAPFISHP (227 aa)). Substrate-binding positions include Trp-22, 82 to 83 (SL), and 143 to 147 (FLALQ). The Nucleophile role is filled by Ser-82. Active-site residues include Asp-207 and His-235. A substrate-binding site is contributed by His-235.

The protein belongs to the AB hydrolase superfamily. Carboxylesterase BioH family. As to quaternary structure, monomer.

It localises to the cytoplasm. It catalyses the reaction 6-carboxyhexanoyl-[ACP] methyl ester + H2O = 6-carboxyhexanoyl-[ACP] + methanol + H(+). Its pathway is cofactor biosynthesis; biotin biosynthesis. In terms of biological role, the physiological role of BioH is to remove the methyl group introduced by BioC when the pimeloyl moiety is complete. It allows to synthesize pimeloyl-ACP via the fatty acid synthetic pathway through the hydrolysis of the ester bonds of pimeloyl-ACP esters. The sequence is that of Pimeloyl-[acyl-carrier protein] methyl ester esterase from Photobacterium profundum (strain SS9).